A 318-amino-acid chain; its full sequence is tRNA U34 carboxymethyltransferase (318 aa).

Residues lysine 88, tryptophan 102, lysine 107, glycine 126, 176–177 (LE), methionine 192, tyrosine 196, and arginine 311 contribute to the carboxy-S-adenosyl-L-methionine site.

Belongs to the class I-like SAM-binding methyltransferase superfamily. CmoB family. Homotetramer.

It carries out the reaction carboxy-S-adenosyl-L-methionine + 5-hydroxyuridine(34) in tRNA = 5-carboxymethoxyuridine(34) in tRNA + S-adenosyl-L-homocysteine + H(+). Catalyzes carboxymethyl transfer from carboxy-S-adenosyl-L-methionine (Cx-SAM) to 5-hydroxyuridine (ho5U) to form 5-carboxymethoxyuridine (cmo5U) at position 34 in tRNAs. In Pseudomonas putida (strain W619), this protein is tRNA U34 carboxymethyltransferase.